The sequence spans 676 residues: DNA ligase (676 aa).

NAD(+)-binding positions include 34 to 38, 84 to 85, and Glu116; these read DAEYD and SL. Lys118 (N6-AMP-lysine intermediate) is an active-site residue. Residues Arg139, Glu174, Lys294, and Lys318 each coordinate NAD(+). Zn(2+) contacts are provided by Cys412, Cys415, Cys428, and Cys433. In terms of domain architecture, BRCT spans 589 to 676; it reads KGGEALKGLT…RTGKKAEELV (88 aa).

Belongs to the NAD-dependent DNA ligase family. LigA subfamily. It depends on Mg(2+) as a cofactor. Requires Mn(2+) as cofactor.

It carries out the reaction NAD(+) + (deoxyribonucleotide)n-3'-hydroxyl + 5'-phospho-(deoxyribonucleotide)m = (deoxyribonucleotide)n+m + AMP + beta-nicotinamide D-nucleotide.. DNA ligase that catalyzes the formation of phosphodiester linkages between 5'-phosphoryl and 3'-hydroxyl groups in double-stranded DNA using NAD as a coenzyme and as the energy source for the reaction. It is essential for DNA replication and repair of damaged DNA. The polypeptide is DNA ligase (Thermus thermophilus (strain ATCC BAA-163 / DSM 7039 / HB27)).